We begin with the raw amino-acid sequence, 219 residues long: tRNA (guanine-N(7)-)-methyltransferase (219 aa).

S-adenosyl-L-methionine is bound by residues Glu44, Asp69, Glu102, and Asn125. Positions 129 and 161 each coordinate substrate.

It belongs to the class I-like SAM-binding methyltransferase superfamily. TrmB family.

It carries out the reaction guanosine(46) in tRNA + S-adenosyl-L-methionine = N(7)-methylguanosine(46) in tRNA + S-adenosyl-L-homocysteine. The protein operates within tRNA modification; N(7)-methylguanine-tRNA biosynthesis. Functionally, catalyzes the formation of N(7)-methylguanine at position 46 (m7G46) in tRNA. The chain is tRNA (guanine-N(7)-)-methyltransferase from Clostridium perfringens (strain SM101 / Type A).